The chain runs to 306 residues: Aspartate carbamoyltransferase catalytic subunit (306 aa).

Carbamoyl phosphate is bound by residues Arg53 and Thr54. Residue Lys82 participates in L-aspartate binding. Positions 103, 131, and 134 each coordinate carbamoyl phosphate. 2 residues coordinate L-aspartate: Arg164 and Arg226. Carbamoyl phosphate-binding residues include Leu263 and Pro264.

Belongs to the aspartate/ornithine carbamoyltransferase superfamily. ATCase family. Heterododecamer (2C3:3R2) of six catalytic PyrB chains organized as two trimers (C3), and six regulatory PyrI chains organized as three dimers (R2).

The enzyme catalyses carbamoyl phosphate + L-aspartate = N-carbamoyl-L-aspartate + phosphate + H(+). It participates in pyrimidine metabolism; UMP biosynthesis via de novo pathway; (S)-dihydroorotate from bicarbonate: step 2/3. Catalyzes the condensation of carbamoyl phosphate and aspartate to form carbamoyl aspartate and inorganic phosphate, the committed step in the de novo pyrimidine nucleotide biosynthesis pathway. The chain is Aspartate carbamoyltransferase catalytic subunit from Methanocaldococcus jannaschii (strain ATCC 43067 / DSM 2661 / JAL-1 / JCM 10045 / NBRC 100440) (Methanococcus jannaschii).